The following is a 313-amino-acid chain: Glucosyl-dolichyl phosphate glucuronosyltransferase (313 aa).

The helical transmembrane segment at 284-304 threads the bilayer; the sequence is LIAIFVFTAAVGFGYVYGLLT.

Belongs to the glycosyltransferase 2 family.

The protein localises to the cell membrane. The catalysed reaction is an archaeal dolichyl alpha-D-glucosyl phosphate + UDP-alpha-D-glucuronate = an archaeal dolichyl beta-D-glucuronosyl-(1-&gt;4)-alpha-D-glucosyl phosphate + UDP + H(+). Its pathway is cell surface structure biogenesis; S-layer biogenesis. Functionally, involved in the protein N-glycosylation pathway responsible for the assembly and attachment of an N-linked pentasaccharide that decorates the S-layer glycoprotein and flagellins. Catalyzes the transfer of a glucuronate residue (GlcA) to a glucose residue already bound to a dolichol phosphate (DolP), a compound that serves as a glycan lipid carrier in Archaea. In vitro, is able to add GlcA to DolP-Glc in which the omega-position isoprene is not saturated. However, the likely physiological lipid substrate is alpha,omega-saturated. This chain is Glucosyl-dolichyl phosphate glucuronosyltransferase, found in Haloferax volcanii (strain ATCC 29605 / DSM 3757 / JCM 8879 / NBRC 14742 / NCIMB 2012 / VKM B-1768 / DS2) (Halobacterium volcanii).